The sequence spans 459 residues: Protoheme IX farnesyltransferase (459 aa).

The segment at 1–184 (MSRNTATQFV…AYVQLMKPRL (184 aa)) is unknown. Helical transmembrane passes span 9–29 (FVAV…LGAT), 66–86 (AAAL…RTGA), 93–113 (AVTL…YTAM), 123–143 (VHLT…AWTL), 184–204 (LMWL…SQLG), 211–231 (AATV…SGTF), 262–282 (LAFG…VNLL), 284–304 (AVLG…VLKP), 325–345 (WVAV…VIFL), 382–402 (HIVY…ELTG), 403–423 (LGPL…YFAI), and 438–458 (FHAS…DTMV). Positions 185–459 (MWLLCLVAGA…VAVVLDTMVV (275 aa)) are protoheme IX prenyltransferase.

The protein in the C-terminal section; belongs to the UbiA prenyltransferase family. Protoheme IX farnesyltransferase subfamily.

It is found in the cell membrane. The catalysed reaction is heme b + (2E,6E)-farnesyl diphosphate + H2O = Fe(II)-heme o + diphosphate. Its pathway is porphyrin-containing compound metabolism; heme O biosynthesis; heme O from protoheme: step 1/1. Its function is as follows. Converts heme B (protoheme IX) to heme O by substitution of the vinyl group on carbon 2 of heme B porphyrin ring with a hydroxyethyl farnesyl side group. In Halobacterium salinarum (strain ATCC 29341 / DSM 671 / R1), this protein is Protoheme IX farnesyltransferase (ctaB).